Consider the following 60-residue polypeptide: Large ribosomal subunit protein eL37 (60 aa).

Positions 18, 21, 33, and 36 each coordinate Zn(2+). A C4-type zinc finger spans residues 18–36 (CRRCGKNSYHVRKKVCAAC).

This sequence belongs to the eukaryotic ribosomal protein eL37 family. Requires Zn(2+) as cofactor.

Its function is as follows. Binds to the 23S rRNA. The protein is Large ribosomal subunit protein eL37 (rpl37e) of Methanothermobacter thermautotrophicus (strain ATCC 29096 / DSM 1053 / JCM 10044 / NBRC 100330 / Delta H) (Methanobacterium thermoautotrophicum).